Here is a 288-residue protein sequence, read N- to C-terminus: Nucleotide-binding protein Pcar_1935 (288 aa).

An ATP-binding site is contributed by 11–18 (GLSGSGKT). 62-65 (DVRN) provides a ligand contact to GTP.

It belongs to the RapZ-like family.

Its function is as follows. Displays ATPase and GTPase activities. This Syntrophotalea carbinolica (strain DSM 2380 / NBRC 103641 / GraBd1) (Pelobacter carbinolicus) protein is Nucleotide-binding protein Pcar_1935.